A 128-amino-acid polypeptide reads, in one-letter code: Large ribosomal subunit protein bL17 (128 aa).

It belongs to the bacterial ribosomal protein bL17 family. Part of the 50S ribosomal subunit. Contacts protein L32.

The protein is Large ribosomal subunit protein bL17 of Streptococcus sanguinis (strain SK36).